Reading from the N-terminus, the 179-residue chain is Large ribosomal subunit protein uL6 (179 aa).

This sequence belongs to the universal ribosomal protein uL6 family. As to quaternary structure, part of the 50S ribosomal subunit.

This protein binds to the 23S rRNA, and is important in its secondary structure. It is located near the subunit interface in the base of the L7/L12 stalk, and near the tRNA binding site of the peptidyltransferase center. The polypeptide is Large ribosomal subunit protein uL6 (Pelobacter propionicus (strain DSM 2379 / NBRC 103807 / OttBd1)).